A 303-amino-acid chain; its full sequence is MQIRRRPPSVAVNVQELQYQVKTPENEPRNILEKIVWFKETEVEQMRDSVSLLDLRKQVANCEPPLSFLDALKHGKTQPALIAEVKKASPSKGVLRENFDPVAIAQAYEAAGASCLSVLTDAEFFQGSFDYLQQIRAAVSLPLLCKEFVIYPYQIYLARSRGADAVLLIAAILSDQDLTYFLKIIKSLGMTALVEVHTLPELERVMDIPGIELIGINNRDLETFTVDLEVTCQLLAQQGTSLQDQDILVVSESGLHTSADLAQVKQAGAGAVLIGESLVKETGNASTHSETEQMQAKISALFS.

This sequence belongs to the TrpC family.

The enzyme catalyses 1-(2-carboxyphenylamino)-1-deoxy-D-ribulose 5-phosphate + H(+) = (1S,2R)-1-C-(indol-3-yl)glycerol 3-phosphate + CO2 + H2O. Its pathway is amino-acid biosynthesis; L-tryptophan biosynthesis; L-tryptophan from chorismate: step 4/5. The sequence is that of Indole-3-glycerol phosphate synthase from Acaryochloris marina (strain MBIC 11017).